Reading from the N-terminus, the 272-residue chain is MIKVVPKVLVMSGYGINCETETAHTFQKAGAKTDIVHINDLIAGKKKMADYEIIMFPGGFSYGDDTGSGNAFANKIKNNLFDDLKEFINSGKLILGICNGFQVMTNLGLFALPSTDYGERISALEANTNNRYECRWVHIKENESICVFTKGIDIIHVPIAHGEGRFYCDEKTYLELKENKQIVFTYCDSEGNPANKEYPLNPNGAYYDIAGICDKSGRIMGLMPHPERSLYSISEPEYQLKKEIAKRNGEIIPEFIESNIQIFKNAVEYFNK.

Residues 8–243 (VLVMSGYGIN…SEPEYQLKKE (236 aa)) form the Glutamine amidotransferase type-1 domain. Residue C98 is the Nucleophile of the active site. Catalysis depends on residues H225, E227, and E235.

As to quaternary structure, part of the FGAM synthase complex composed of 1 PurL, 1 PurQ and 2 PurS subunits.

Its subcellular location is the cytoplasm. The catalysed reaction is N(2)-formyl-N(1)-(5-phospho-beta-D-ribosyl)glycinamide + L-glutamine + ATP + H2O = 2-formamido-N(1)-(5-O-phospho-beta-D-ribosyl)acetamidine + L-glutamate + ADP + phosphate + H(+). The enzyme catalyses L-glutamine + H2O = L-glutamate + NH4(+). It functions in the pathway purine metabolism; IMP biosynthesis via de novo pathway; 5-amino-1-(5-phospho-D-ribosyl)imidazole from N(2)-formyl-N(1)-(5-phospho-D-ribosyl)glycinamide: step 1/2. Part of the phosphoribosylformylglycinamidine synthase complex involved in the purines biosynthetic pathway. Catalyzes the ATP-dependent conversion of formylglycinamide ribonucleotide (FGAR) and glutamine to yield formylglycinamidine ribonucleotide (FGAM) and glutamate. The FGAM synthase complex is composed of three subunits. PurQ produces an ammonia molecule by converting glutamine to glutamate. PurL transfers the ammonia molecule to FGAR to form FGAM in an ATP-dependent manner. PurS interacts with PurQ and PurL and is thought to assist in the transfer of the ammonia molecule from PurQ to PurL. This Methanococcus maripaludis (strain C7 / ATCC BAA-1331) protein is Phosphoribosylformylglycinamidine synthase subunit PurQ.